The following is a 438-amino-acid chain: Methionine aminopeptidase 2 (438 aa).

Positions 1 to 89 are disordered; that stretch reads MAAQAAPAEE…LFPNKQYPKG (89 aa). Basic and acidic residues predominate over residues 10–20; that stretch reads ELSKLSVEETK. Positions 51–65 are enriched in basic residues; the sequence is AKKKKKRKPRKKKKA. His-191 contacts substrate. Positions 211, 222, and 291 each coordinate a divalent metal cation. His-299 contributes to the substrate binding site. A divalent metal cation is bound by residues Glu-324 and Glu-419.

The protein belongs to the peptidase M24A family. Methionine aminopeptidase eukaryotic type 2 subfamily. Co(2+) is required as a cofactor. Zn(2+) serves as cofactor. Requires Mn(2+) as cofactor. The cofactor is Fe(2+).

Its subcellular location is the cytoplasm. The enzyme catalyses Release of N-terminal amino acids, preferentially methionine, from peptides and arylamides.. In terms of biological role, cotranslationally removes the N-terminal methionine from nascent proteins. The N-terminal methionine is often cleaved when the second residue in the primary sequence is small and uncharged (Met-Ala-, Cys, Gly, Pro, Ser, Thr, or Val). The chain is Methionine aminopeptidase 2 from Sordaria macrospora (strain ATCC MYA-333 / DSM 997 / K(L3346) / K-hell).